The chain runs to 238 residues: Demethylmenaquinone methyltransferase (238 aa).

S-adenosyl-L-methionine is bound by residues T65, D85, and 109-110 (DA).

The protein belongs to the class I-like SAM-binding methyltransferase superfamily. MenG/UbiE family.

It catalyses the reaction a 2-demethylmenaquinol + S-adenosyl-L-methionine = a menaquinol + S-adenosyl-L-homocysteine + H(+). The protein operates within quinol/quinone metabolism; menaquinone biosynthesis; menaquinol from 1,4-dihydroxy-2-naphthoate: step 2/2. Functionally, methyltransferase required for the conversion of demethylmenaquinol (DMKH2) to menaquinol (MKH2). This Roseiflexus sp. (strain RS-1) protein is Demethylmenaquinone methyltransferase.